An 810-amino-acid chain; its full sequence is Plasminogen (810 aa).

A signal peptide spans 1–19 (MEHKEVVLLLLLFLKSGQG). The PAN domain occupies 20–98 (EPLDDYVNTQ…RDVVLFEKKV (79 aa)). Disulfide bonds link cysteine 49–cysteine 73, cysteine 53–cysteine 61, cysteine 103–cysteine 181, cysteine 124–cysteine 164, cysteine 152–cysteine 176, cysteine 185–cysteine 262, cysteine 188–cysteine 316, cysteine 206–cysteine 245, cysteine 234–cysteine 257, cysteine 275–cysteine 352, cysteine 296–cysteine 335, and cysteine 324–cysteine 347. Kringle domains lie at 103-181 (CKTG…IPEC), 184-262 (ACMH…IPRC), and 275-352 (CLKG…IPSC). The segment at 126-145 (KWSSTSPHRPRFSPATHPSE) is disordered. 3 residues coordinate L-lysine: arginine 136, aspartate 158, and arginine 172. Threonine 365 is a glycosylation site (O-linked (GalNAc...) threonine). Cystine bridges form between cysteine 377/cysteine 454, cysteine 398/cysteine 437, cysteine 426/cysteine 449, cysteine 481/cysteine 560, cysteine 502/cysteine 543, cysteine 531/cysteine 555, cysteine 567/cysteine 685, cysteine 577/cysteine 585, and cysteine 607/cysteine 623. 2 Kringle domains span residues 377–454 (CYHG…LKKC) and 481–560 (CMFG…VPQC). L-lysine contacts are provided by aspartate 432 and arginine 445. One can recognise a Peptidase S1 domain in the interval 581–808 (VVGGCVANAH…FVTWIEGVMR (228 aa)). Serine 597 carries the post-translational modification Phosphoserine. Catalysis depends on charge relay system residues histidine 622 and aspartate 665. The residue at position 688 (serine 688) is a Phosphoserine. 3 disulfides stabilise this stretch: cysteine 699/cysteine 766, cysteine 729/cysteine 745, and cysteine 756/cysteine 784. The active-site Charge relay system is the serine 760.

Belongs to the peptidase S1 family. Plasminogen subfamily. Interacts with CSPG4 and AMOT. Interacts (via the Kringle domains) with HRG; the interaction tethers PLG to the cell surface and enhances its activation. Interacts (via Kringle 4 domain) with ADA; the interaction stimulates PLG activation when in complex with DPP4. Angiostatin: Interacts with ATP5F1A; the interaction inhibits most of the angiogenic effects of angiostatin. Post-translationally, in the presence of the inhibitor, the activation involves only cleavage after Arg-580, yielding two chains held together by two disulfide bonds. In the absence of the inhibitor, the activation involves additionally the removal of the activation peptide.

It localises to the secreted. It carries out the reaction Preferential cleavage: Lys-|-Xaa &gt; Arg-|-Xaa, higher selectivity than trypsin. Converts fibrin into soluble products.. With respect to regulation, converted into plasmin by plasminogen activators, both plasminogen and its activator being bound to fibrin. Activated with catalytic amounts of streptokinase. In terms of biological role, plasmin dissolves the fibrin of blood clots and acts as a proteolytic factor in a variety of other processes including embryonic development, tissue remodeling, tumor invasion, and inflammation. In ovulation, weakens the walls of the Graafian follicle. It activates the urokinase-type plasminogen activator, collagenases and several complement zymogens, such as C1, C4 and C5. Cleavage of fibronectin and laminin leads to cell detachment and apoptosis. Also cleaves fibrin, thrombospondin and von Willebrand factor. Its role in tissue remodeling and tumor invasion may be modulated by CSPG4. Binds to cells. The polypeptide is Plasminogen (PLG) (Pongo abelii (Sumatran orangutan)).